The sequence spans 368 residues: MSNQHTLLSSNLLPVGSNISTWWNFGSMLLTCLILQTSTGFFLAMHYTANINLAFSSVIHILRDVPYGWIMQNTHAIGASMFFICVYIHIARGLYYGLYLNKEVWLSGTALLITLMATAFFGYVLPWGQMSFWAATVITNLLTAIPYLGTTLTTWLWGGFSINDPTLTRFFALHFILPFLIISLSSIHIILLHNEGSNNPLGTNPDIDKIPFHPYHSYKDMLVLTIMITLLFTIMSFTPNLFNDPENFSKANPLVTPQHIKPEWYFLFAYGILRSIPNKLGGTLALLMSVMILTTTPFTHTSRIRSMTFRPLTQTLFWLLIATFITITWTATKPVEPPFIFISQMASIIYFSFFIINPILGWAENKMQ.

The next 4 membrane-spanning stretches (helical) occupy residues 25–45, 69–90, 105–125, and 170–190; these read FGSM…FLAM, WIMQ…YIHI, WLSG…GYVL, and FFAL…IHII. Residues His75 and His89 each coordinate heme b. His174 and His188 together coordinate heme b. His193 serves as a coordination point for a ubiquinone. A run of 4 helical transmembrane segments spans residues 218–238, 280–300, 312–332, and 339–358; these read YKDM…MSFT, LGGT…PFTH, LTQT…WTAT, and FIFI…IINP.

Belongs to the cytochrome b family. In terms of assembly, the cytochrome bc1 complex contains 3 respiratory subunits (MT-CYB, CYC1 and UQCRFS1), 2 core proteins (UQCRC1 and UQCRC2) and probably 6 low-molecular weight proteins. Requires heme b as cofactor.

The protein localises to the mitochondrion inner membrane. Its function is as follows. Component of the ubiquinol-cytochrome c reductase complex (complex III or cytochrome b-c1 complex) that is part of the mitochondrial respiratory chain. The b-c1 complex mediates electron transfer from ubiquinol to cytochrome c. Contributes to the generation of a proton gradient across the mitochondrial membrane that is then used for ATP synthesis. The polypeptide is Cytochrome b (MT-CYB) (Notechis ater (Black tiger snake)).